The sequence spans 234 residues: Sugar fermentation stimulation protein A (234 aa).

Residues Leu-201–Ser-220 constitute a DNA-binding region (H-T-H motif).

Belongs to the SfsA family.

Functionally, binds to DNA non-specifically. Could be a regulatory factor involved in maltose metabolism. The protein is Sugar fermentation stimulation protein A of Shigella sonnei (strain Ss046).